A 368-amino-acid polypeptide reads, in one-letter code: Flagellar P-ring protein (368 aa).

The first 24 residues, 1-24 (MNSIFRKIVFAAFLLLALPQFALA), serve as a signal peptide directing secretion.

It belongs to the FlgI family. The basal body constitutes a major portion of the flagellar organelle and consists of four rings (L,P,S, and M) mounted on a central rod.

It is found in the periplasm. Its subcellular location is the bacterial flagellum basal body. Functionally, assembles around the rod to form the L-ring and probably protects the motor/basal body from shearing forces during rotation. The chain is Flagellar P-ring protein from Geotalea uraniireducens (strain Rf4) (Geobacter uraniireducens).